The chain runs to 299 residues: Transcription elongation factor A protein 2 (299 aa).

One can recognise a TFIIS N-terminal domain in the interval 5–82; it reads EEIARIARRL…KSWKKLLDVS (78 aa). K57 is covalently cross-linked (Glycyl lysine isopeptide (Lys-Gly) (interchain with G-Cter in ubiquitin)). A phosphoserine mark is found at S59 and S100. The interval 83 to 126 is disordered; sequence DGKSRDQGRGTPLPTSSSKDASGTTDLSCKKPDPPRTSSTPRIT. The span at 95–109 shows a compositional bias: polar residues; that stretch reads LPTSSSKDASGTTDL. In terms of domain architecture, TFIIS central spans 138–254; sequence VRNKCREMLT…EHQMARTGGT (117 aa). A TFIIS-type zinc finger spans residues 257–297; the sequence is DLFTCNKCRKKNCTYTQVQTRSSDEPMTTYVVCNECGNRWK. Zn(2+) is bound by residues C261, C264, C289, and C292.

Belongs to the TFS-II family. In terms of assembly, interacts with the basal transcription factor GTF2B. Interacts with REXO1. Testis specific.

It is found in the nucleus. Functionally, necessary for efficient RNA polymerase II transcription elongation past template-encoded arresting sites. The arresting sites in DNA have the property of trapping a certain fraction of elongating RNA polymerases that pass through, resulting in locked ternary complexes. Cleavage of the nascent transcript by S-II allows the resumption of elongation from the new 3'-terminus. This is Transcription elongation factor A protein 2 (Tcea2) from Rattus norvegicus (Rat).